The sequence spans 360 residues: MRTELFDFDLPTQNIALRPVSPRDAARMLVVRPSVPLEDRIVRDLPALLAPGDQLVVNDTRVIAAQLTGRRIGRGLEPKIEATLIKRLDGARWQALVKPAKKLLPGDVVRFGHDGRVCLLGHLDATVEAKGDAGEVTLAFSFHGPVLDQAIAEVGATPLPPYIASKRAPDAQDIADYQTMFASNEGAVAAPTAGLHFTAELETALAARGVGLHRITLHVGAGTFLPVKAEDTSEHRMHAEWGTISSGTAEALNAARAAGGRIVAVGTTSLRLLESAARDDGRIAPFADETSIFITPGYRFRAVDMLMTNFHLPRSTLFMLVSAFCGLDTMQAAYAHAIRTGYRFYSYGDASLLFRNDITP.

Belongs to the QueA family. Monomer.

Its subcellular location is the cytoplasm. It catalyses the reaction 7-aminomethyl-7-carbaguanosine(34) in tRNA + S-adenosyl-L-methionine = epoxyqueuosine(34) in tRNA + adenine + L-methionine + 2 H(+). It participates in tRNA modification; tRNA-queuosine biosynthesis. In terms of biological role, transfers and isomerizes the ribose moiety from AdoMet to the 7-aminomethyl group of 7-deazaguanine (preQ1-tRNA) to give epoxyqueuosine (oQ-tRNA). This is S-adenosylmethionine:tRNA ribosyltransferase-isomerase from Rhodopseudomonas palustris (strain TIE-1).